A 377-amino-acid polypeptide reads, in one-letter code: ATP synthase gamma chain, chloroplastic (377 aa).

Residues 1 to 55 constitute a chloroplast transit peptide; sequence MSCSNLTMLVSSKPSLSDSSALSFRSSVSPFQLPNHNTSGPSNPSRSSSVTPVHC. The tract at residues 30–52 is disordered; sequence PFQLPNHNTSGPSNPSRSSSVTP. Over residues 37-52 the composition is skewed to low complexity; sequence NTSGPSNPSRSSSVTP. Cys-143 is an active-site residue. An intrachain disulfide couples Cys-253 to Cys-259.

It belongs to the ATPase gamma chain family. F-type ATPases have 2 components, CF(1) - the catalytic core - and CF(0) - the membrane proton channel. CF(1) has five subunits: alpha(3), beta(3), gamma(1), delta(1), epsilon(1). CF(0) has four main subunits: a, b, b' and c.

Its subcellular location is the plastid. It is found in the chloroplast thylakoid membrane. In terms of biological role, produces ATP from ADP in the presence of a proton gradient across the membrane. The gamma chain is believed to be important in regulating ATPase activity and the flow of protons through the CF(0) complex. This chain is ATP synthase gamma chain, chloroplastic (ATPC), found in Nicotiana tabacum (Common tobacco).